We begin with the raw amino-acid sequence, 521 residues long: Insulinoma-associated protein 1 (521 aa).

The segment covering 1 to 12 has biased composition (basic residues); sequence MPRGFLVKRSKK. The tract at residues 1 to 20 is SNAG domain; the sequence is MPRGFLVKRSKKSTPVSYRV. Disordered stretches follow at residues 1-59, 76-107, and 180-230; these read MPRG…PPAL, GPPPPPPPGPRAAHFGNPEAAHPAPLYSPTRP, and AEAA…KPKA. The segment at 2–7 is required and sufficient for interaction with KDM1A; the sequence is PRGFLV. The segment at 43–56 is necessary for interaction with CCND1; that stretch reads PPVPSPGPLPPPPP. Pro residues-rich tracts occupy residues 43 to 58 and 76 to 85; these read PPVPSPGPLPPPPPPA and GPPPPPPPGP. Residues 209 to 223 show a composition bias toward low complexity; it reads AAVATEPPAKAAKAP. The C2H2-type 1; atypical zinc-finger motif lies at 272–292; it reads FICQLCKEEYADPFALAQHKC. A C2H2-type 2 zinc finger spans residues 300 to 322; sequence YRCPECAKVFSCPANLASHRRWH. Positions 320-369 are disordered; the sequence is RWHKPRPVPAAARAPEPEAATRAEAREAAGGGSSDRDTPSPGGVSESGSE. Over residues 334-346 the composition is skewed to basic and acidic residues; that stretch reads PEPEAATRAEARE. The C2H2-type 3 zinc-finger motif lies at 373–395; sequence YECHHCAKKFRRQAYLRKHLLAH. The tract at residues 398 to 419 is disordered; it reads ALQAKGAPPPPPPPPPPAEDIL. Residues 404–415 show a composition bias toward pro residues; it reads APPPPPPPPPPA. 2 consecutive C2H2-type zinc fingers follow at residues 452–475 and 480–503; these read HLCPVCGETFPSKGAQERHLRLLH and FPCKYCPATFYSSPGLTRHINKCH.

Belongs to the INSM1 family. As to quaternary structure, interacts (via the N-terminal region) with CCND1 (via cyclin N-terminal domain); the interaction competes with the binding of CCND1 to CDK4 during cell cycle progression and increases its transcriptional repressor activity. Interacts with HDAC3; the interaction increases its transcriptional repressor activity. Interacts (via the SNAG domain) with HDAC1. Interacts (via the SNAG domain) with HDAC2. Interacts (via the SNAG domain) with KDM1A. Interacts (via the SNAG domain) with RCOR1. Interacts with SORBS1. In terms of tissue distribution, expressed in adrenal gland. Expressed in the dentate gyrus of the hippocampus and the wall of the lateral ventricle. Expressed in pancreatic and intestinal endocrine cells.

Its subcellular location is the nucleus. In terms of biological role, sequence-specific DNA-binding transcriptional regulator that plays a key role in neurogenesis and neuroendocrine cell differentiation during embryonic and/or fetal development. Binds to the consensus sequence 5'-[TG][TC][TC][TT][GA]GGG[CG]A-3' in target promoters. Acts as a transcriptional repressor of NEUROD1 and INS expression via its interaction with cyclin CCND1 in a cell cycle-independent manner. Negatively regulates skeletal muscle-specific gene expression in endocrine cells of the pituitary by inhibiting the Notch signaling pathway. Represses target gene transcription by recruiting chromatin-modifying factors, such as HDAC1, HDAC2, HDAC3, KDM1A and RCOR1 histone deacetylases. Binds to its own promoter, suggesting autoregulation as a self-control feedback mechanism. Competes with histone H3 for the same binding site on the histone demethylase complex formed by KDM1A and RCOR1, and thereby inhibits demethylation of histone H3 at 'Lys-4'. Promotes the generation and expansion of neuronal basal progenitor cells in the developing neocortex. Involved in the differentiation of endocrine cells of the developing anterior pituitary gland, of the pancreas and intestine, and of sympatho-adrenal cells in the peripheral nervous system. Promotes cell cycle signaling arrest and inhibition of cellular proliferation. This chain is Insulinoma-associated protein 1 (Insm1), found in Mus musculus (Mouse).